Reading from the N-terminus, the 170-residue chain is Ribosomal RNA small subunit methyltransferase G (170 aa).

S-adenosyl-L-methionine contacts are provided by residues glycine 70, leucine 75, 120-121 (AE), and arginine 138.

The protein belongs to the methyltransferase superfamily. RNA methyltransferase RsmG family.

Its subcellular location is the cytoplasm. Specifically methylates the N7 position of guanine in position 518 of 16S rRNA. This Mycobacterium ulcerans (strain Agy99) protein is Ribosomal RNA small subunit methyltransferase G.